The following is a 351-amino-acid chain: Ribonucleoside-diphosphate reductase subunit beta (351 aa).

Positions 94, 124, and 127 each coordinate Fe cation. Residue Tyr131 is part of the active site. The Fe cation site is built by Glu191, Glu225, and His228.

Belongs to the ribonucleoside diphosphate reductase small chain family. As to quaternary structure, tetramer of two alpha and two beta subunits. Fe cation serves as cofactor.

The enzyme catalyses a 2'-deoxyribonucleoside 5'-diphosphate + [thioredoxin]-disulfide + H2O = a ribonucleoside 5'-diphosphate + [thioredoxin]-dithiol. Provides the precursors necessary for DNA synthesis. Catalyzes the biosynthesis of deoxyribonucleotides from the corresponding ribonucleotides. The polypeptide is Ribonucleoside-diphosphate reductase subunit beta (nrdB) (Treponema pallidum (strain Nichols)).